The following is a 508-amino-acid chain: Chromosomal replication initiator protein DnaA (508 aa).

A domain I, interacts with DnaA modulators region spans residues 1–91; it reads MADDPGSSFT…TDALSRRLGQ (91 aa). Residues 91–167 are domain II; the sequence is QQIQLGVRIA…AIDPAVAAGT (77 aa). The interval 104-152 is disordered; sequence DDVEDALIPSAEPFPDTDADLSARRRTDSRASGERGAVTNTQPGWTNYF. Residues 124 to 136 are compositionally biased toward basic and acidic residues; that stretch reads LSARRRTDSRASG. Over residues 141–152 the composition is skewed to polar residues; that stretch reads VTNTQPGWTNYF. A domain III, AAA+ region region spans residues 168-384; sequence SLNRRYTFDT…GALIRVTAFA (217 aa). Residues glycine 212, glycine 214, lysine 215, and threonine 216 each contribute to the ATP site. The domain IV, binds dsDNA stretch occupies residues 385–508; the sequence is SLNKTPIDKS…TTRIRQRSKR (124 aa).

Belongs to the DnaA family. Oligomerizes as a right-handed, spiral filament on DNA at oriC.

Its subcellular location is the cytoplasm. In terms of biological role, plays an essential role in the initiation and regulation of chromosomal replication. ATP-DnaA binds to the origin of replication (oriC) to initiate formation of the DNA replication initiation complex once per cell cycle. Binds the DnaA box (a 9 base pair repeat at the origin) and separates the double-stranded (ds)DNA. Forms a right-handed helical filament on oriC DNA; dsDNA binds to the exterior of the filament while single-stranded (ss)DNA is stabiized in the filament's interior. The ATP-DnaA-oriC complex binds and stabilizes one strand of the AT-rich DNA unwinding element (DUE), permitting loading of DNA polymerase. After initiation quickly degrades to an ADP-DnaA complex that is not apt for DNA replication. Binds acidic phospholipids. The protein is Chromosomal replication initiator protein DnaA of Mycobacterium avium.